A 71-amino-acid chain; its full sequence is High-potential iron-sulfur protein (71 aa).

Glutamine 1 is modified (pyrrolidone carboxylic acid). Residues cysteine 37, cysteine 40, cysteine 50, and cysteine 64 each contribute to the [4Fe-4S] cluster site.

Belongs to the high-potential iron-sulfur protein (HiPIP) family. As to quaternary structure, homodimer.

Specific class of high-redox-potential 4Fe-4S ferredoxins. Functions in anaerobic electron transport in most purple and in some other photosynthetic bacteria and in at least one genus (Paracoccus) of halophilic, denitrifying bacteria. In Halomonas halodenitrificans (strain ATCC 12084 / NCIMB 8669) (Paracoccus halodenitrificans), this protein is High-potential iron-sulfur protein (hip).